The primary structure comprises 61 residues: Protein MATERNALLY EXPRESSED GENE 6 (61 aa).

Cys38 and Cys60 form a disulfide bridge.

It belongs to the MEG family. In terms of tissue distribution, ubiquitous.

This chain is Protein MATERNALLY EXPRESSED GENE 6 (MEG6), found in Zea mays (Maize).